Here is a 200-residue protein sequence, read N- to C-terminus: Glycerol-3-phosphate acyltransferase (200 aa).

5 consecutive transmembrane segments (helical) span residues F2–V22, K51–A71, A84–F104, L114–V134, and F159–F179.

The protein belongs to the PlsY family. In terms of assembly, probably interacts with PlsX.

The protein resides in the cell inner membrane. It catalyses the reaction an acyl phosphate + sn-glycerol 3-phosphate = a 1-acyl-sn-glycero-3-phosphate + phosphate. Its pathway is lipid metabolism; phospholipid metabolism. Catalyzes the transfer of an acyl group from acyl-phosphate (acyl-PO(4)) to glycerol-3-phosphate (G3P) to form lysophosphatidic acid (LPA). This enzyme utilizes acyl-phosphate as fatty acyl donor, but not acyl-CoA or acyl-ACP. This Neisseria meningitidis serogroup C (strain 053442) protein is Glycerol-3-phosphate acyltransferase.